The sequence spans 527 residues: Catalase (527 aa).

Positions 1–22 (MADSRDPASDQMKQWKEQRAPQ) are enriched in basic and acidic residues. Residues 1 to 34 (MADSRDPASDQMKQWKEQRAPQKPDVLTTGGGNP) form a disordered region. Position 2 is an N-acetylalanine (Ala2). The residue at position 9 (Ser9) is a Phosphoserine. Residue Lys13 is modified to N6-succinyllysine. Residues His75 and Asn148 contribute to the active site. His194, Ser201, Arg203, and Asn213 together coordinate NADP(+). The residue at position 221 (Lys221) is an N6-succinyllysine. N6-acetyllysine is present on Lys233. NADP(+) contacts are provided by Lys237, Trp303, His305, and Lys306. Lys306 bears the N6-acetyllysine; alternate mark. Lys306 is modified (N6-succinyllysine; alternate). Tyr358 provides a ligand contact to heme. Phosphoserine occurs at positions 417 and 434. 2 positions are modified to N6-acetyllysine; alternate: Lys449 and Lys480. Residues Lys449 and Lys480 each carry the N6-succinyllysine; alternate modification. Residue Thr511 is modified to Phosphothreonine. Ser517 bears the Phosphoserine mark. Lys522 carries the N6-succinyllysine modification. A Microbody targeting signal; atypical motif is present at residues 524 to 527 (KANL).

This sequence belongs to the catalase family. In terms of assembly, homotetramer. Interacts (via microbody targeting signal) with PEX5, monomeric form interacts with PEX5, leading to its translocation into peroxisomes. Heme is required as a cofactor. NADP(+) serves as cofactor. Expressed in renal proximal tubules (at protein level).

It localises to the peroxisome matrix. It carries out the reaction 2 H2O2 = O2 + 2 H2O. Catalyzes the degradation of hydrogen peroxide (H(2)O(2)) generated by peroxisomal oxidases to water and oxygen, thereby protecting cells from the toxic effects of hydrogen peroxide. Promotes growth of cells including T-cells, B-cells, myeloid leukemia cells, melanoma cells, mastocytoma cells and normal and transformed fibroblast cells. The polypeptide is Catalase (Cat) (Rattus norvegicus (Rat)).